The following is a 490-amino-acid chain: Capsid protein (490 aa).

Positions 79 to 143 are disordered; sequence GETSEEESDS…TQPKTIPGQK (65 aa). A compositionally biased stretch (acidic residues) spans 81–94; it reads TSEEESDSGEEPEF. The segment covering 95-111 has biased composition (basic and acidic residues); sequence EQVRMDRTGGTEIPKEE. The short motif at 122–125 is the Nuclear localization signal element; it reads RKRK. The segment at 411-428 adopts a CCHC-type zinc-finger fold; it reads CRCWICNIEGHYANECPN. The disordered stretch occupies residues 464–490; sequence YKEEEEETSTEEDDGSSTSEDSDSESD. Positions 465–490 are enriched in acidic residues; sequence KEEEEETSTEEDDGSSTSEDSDSESD.

It belongs to the caulimoviridae capsid protein family. As to quaternary structure, interacts (via nuclear localization signal) with host importin alpha.

Its subcellular location is the virion. It is found in the host nucleus. Self assembles to form an icosahedral capsid, about 50 nm in diameter, nm, composed of 420 subunits of the viral capsid protein. The capsid encapsulates the genomic dsDNA. Following virus entry into host cell, provides nuclear import of the viral genome. Virus particles do not enter the nucleus, but dock at the nuclear membrane through the interaction with host importins. This is Capsid protein from Arabidopsis thaliana (Mouse-ear cress).